A 236-amino-acid polypeptide reads, in one-letter code: Ribose-5-phosphate isomerase A (236 aa).

Substrate is bound by residues 29-32 (SGST), 86-89 (DGAD), and 99-102 (KGGG). Residue glutamate 108 is the Proton acceptor of the active site. Lysine 126 serves as a coordination point for substrate.

The protein belongs to the ribose 5-phosphate isomerase family. Homodimer.

It carries out the reaction aldehydo-D-ribose 5-phosphate = D-ribulose 5-phosphate. The protein operates within carbohydrate degradation; pentose phosphate pathway; D-ribose 5-phosphate from D-ribulose 5-phosphate (non-oxidative stage): step 1/1. Functionally, catalyzes the reversible conversion of ribose-5-phosphate to ribulose 5-phosphate. In Prochlorococcus marinus (strain NATL1A), this protein is Ribose-5-phosphate isomerase A.